We begin with the raw amino-acid sequence, 216 residues long: MMSACLGFRELGLQPYEPVLEAMRRFTEQRSPDSQDEIWLVEHPAVFTQGQAGKAEHLLVPGDIPVVQTDRGGQVTYHGPGQLVAYLLLDVRRLGFGVRELVSRIELALIDLLASYAVQASAKPDAPGVYVDGAKIASLGLRIRNGRSFHGLALNVDMDLAPFRRINPCGYAGLAMTQLRDLAGPIELDEVRTRLRGQLVKHLDYAEQTTLTGGID.

The BPL/LPL catalytic domain occupies 32–207; that stretch reads PDSQDEIWLV…QLVKHLDYAE (176 aa). Residues 71-78, 138-140, and 151-153 contribute to the substrate site; these read RGGQVTYH, SLG, and GLA. Residue C169 is the Acyl-thioester intermediate of the active site.

Belongs to the LipB family.

The protein localises to the cytoplasm. The catalysed reaction is octanoyl-[ACP] + L-lysyl-[protein] = N(6)-octanoyl-L-lysyl-[protein] + holo-[ACP] + H(+). It functions in the pathway protein modification; protein lipoylation via endogenous pathway; protein N(6)-(lipoyl)lysine from octanoyl-[acyl-carrier-protein]: step 1/2. Functionally, catalyzes the transfer of endogenously produced octanoic acid from octanoyl-acyl-carrier-protein onto the lipoyl domains of lipoate-dependent enzymes. Lipoyl-ACP can also act as a substrate although octanoyl-ACP is likely to be the physiological substrate. In Pseudomonas putida (strain ATCC 47054 / DSM 6125 / CFBP 8728 / NCIMB 11950 / KT2440), this protein is Octanoyltransferase.